A 493-amino-acid chain; its full sequence is MRDPVFLLGFWSLYCCFPAGSLTTLRPQGSLRDEHHKPTGVPVTITTKPSVTFNIRTSKDPEHEGCNLSLGDSKLLENCGFNMTAKTFFIIHGWTMSGMFESWLHKLVSALQTREKEANVVVVDWLPLAHQLYIDAVSNTRVVGRRVAGMLNWLQEKGEFSLGDVHLIGYSLGAHVAGYAGNFVKGTVGRITGLDPAGPMFEGVDINRRLSPDDADFVDVLHTYTLSFGLSIGIRMPVGHIDIYPNGGDFQPGCGFNDVMGSFAYGTISEMVKCEHERAVHLFVDSLVNQDKPSFAFQCTDPNRFKRGICLSCRKNRCNNIGYNAKKMRKKRNSKMYLKTRAGMPFRVYHYQLKVHMFSYKNSGDIQPDLYITLYGSNADSQNLPLEIVEKIELNATNTFLVYTEEYLGDLFKIRLTWEGVSSSWYNLWNEFRSYLSQPSSPSRELHIRRIRVKSGETQRKVAFCVQDPMKNSISPGQELWFYKCQNDCRVKN.

An N-terminal signal peptide occupies residues 1 to 23; it reads MRDPVFLLGFWSLYCCFPAGSLT. The cysteines at positions 66 and 79 are disulfide-linked. N-linked (GlcNAc...) asparagine glycosylation is found at asparagine 67 and asparagine 82. Serine 171 acts as the Nucleophile in catalysis. The active-site Charge relay system is aspartate 195. The cysteines at positions 254 and 274 are disulfide-linked. Histidine 276 functions as the Charge relay system in the catalytic mechanism. Cystine bridges form between cysteine 299–cysteine 318 and cysteine 310–cysteine 313. 327–339 is a heparin binding site; sequence KMRKKRNSKMYLK. The 136-residue stretch at 349 to 484 folds into the PLAT domain; the sequence is YHYQLKVHMF…SPGQELWFYK (136 aa). Asparagine 395 carries an N-linked (GlcNAc...) asparagine glycan. Residues cysteine 465 and cysteine 485 are joined by a disulfide bond.

The protein belongs to the AB hydrolase superfamily. Lipase family. In terms of assembly, head to tail Homodimer. Interacts with apolipoprotein C-2.

The protein resides in the secreted. It catalyses the reaction a triacylglycerol + H2O = a diacylglycerol + a fatty acid + H(+). The enzyme catalyses a 1,2-diacyl-sn-glycero-3-phosphocholine + H2O = a 2-acyl-sn-glycero-3-phosphocholine + a fatty acid + H(+). The catalysed reaction is 1,2,3-tri-(9Z-octadecenoyl)-glycerol + H2O = di-(9Z)-octadecenoylglycerol + (9Z)-octadecenoate + H(+). It carries out the reaction 1,2,3-tributanoylglycerol + H2O = dibutanoylglycerol + butanoate + H(+). It catalyses the reaction 1,2-dihexadecanoyl-sn-glycero-3-phosphocholine + H2O = hexadecanoyl-sn-glycero-3-phosphocholine + hexadecanoate + H(+). Exerts both phospholipase and triglyceride lipase activities. More active as a phospholipase than a triglyceride lipase. Hydrolyzes triglycerides, both with short-chain fatty acyl groups (tributyrin) and long-chain fatty acyl groups (triolein) with similar levels of activity toward both types of substrates. Hydrolyzes high density lipoproteins (HDL) more efficiently than other lipoproteins. The sequence is that of Endothelial lipase (Lipg) from Rattus norvegicus (Rat).